The primary structure comprises 387 residues: Acetylajmalan esterase (387 aa).

A signal peptide spans 1 to 22 (MGFARLLHLVFSLLVFAGITNG). Serine 36 (nucleophile) is an active-site residue. Residues asparagine 98, asparagine 180, asparagine 199, asparagine 249, and asparagine 296 are each glycosylated (N-linked (GlcNAc...) asparagine). Residues aspartate 337 and histidine 340 contribute to the active site.

The protein belongs to the 'GDSL' lipolytic enzyme family.

The catalysed reaction is 17-O-acetylajmaline + H2O = ajmaline + acetate + H(+). It carries out the reaction 17-O-acetylnorajmaline + H2O = norajmaline + acetate + H(+). It participates in alkaloid biosynthesis; ajmaline biosynthesis. Its function is as follows. Acetylesterase involved in the biosynthesis of ajmaline-type monoterpenoid indole alkaloids (MIAs) natural products, important plant-derived pharmaceuticals used in the therapy of heart disorders. Deacetylates 17-O-acetylajmaline and 17-O-acetylnorajmaline to produce ajmaline and norajmaline, but is inactive toward other acetylated alkaloids. This Rauvolfia serpentina (Serpentine wood) protein is Acetylajmalan esterase.